The primary structure comprises 380 residues: MADPKFQNLPGIAYDQPDVYETPDDPETDTSDYYEEEPENEAIERMHISASAAHKRFSGATLEGSVDFTDRIGRRPGRGYDMRGAGEYELVGQGEKETPVQKCQRLQIEMNELLNEVAALQVDRKIADEEKQSYDAVATVISTAKKVLDTLKLEQVLGKEQVPNSKQVKALISQVEEFKQSGVLTAIPTPGTDLASTARVASLEQRLYQLEKTVGAQPEKLSRLNAATNTTNVLEAVRQLSTKAALLQPDKLDTIEQRLTTLAGKMDSIAEKSSGSSQDAKRDQKISELYDIAKRTEPVVEILPHVIERMQALESLHKYANNFAKIIAEIEHKQGTITTSLVNNKELLHSVQETFAQNLETITNKVAKVEQRVTAISTAK.

The tract at residues 1-40 is disordered; that stretch reads MADPKFQNLPGIAYDQPDVYETPDDPETDTSDYYEEEPEN. Residues 21-40 are compositionally biased toward acidic residues; it reads ETPDDPETDTSDYYEEEPEN. Coiled coils occupy residues 100–135 and 353–377; these read VQKC…QSYD and ETFA…TAIS.

Belongs to the dynactin subunit 2 family. As to quaternary structure, subunit of dynactin, a multiprotein complex associated with dynein.

The protein resides in the cytoplasm. It is found in the cytoskeleton. Its subcellular location is the membrane. Functionally, modulates cytoplasmic dynein binding to an organelle, and plays a role in prometaphase chromosome alignment and spindle organization during mitosis. May play a role in synapse formation during brain development. In Drosophila pseudoobscura pseudoobscura (Fruit fly), this protein is Dynactin subunit 2.